A 248-amino-acid polypeptide reads, in one-letter code: Large ribosomal subunit protein uL2 (248 aa).

The interval 203-248 is disordered; that stretch reads AHPAGGGHHPKGLTPAPRNAPPGRKVGHIAPRRTGRKKGASRTPTQ. A compositionally biased stretch (basic residues) spans 227–242; sequence KVGHIAPRRTGRKKGA.

This sequence belongs to the universal ribosomal protein uL2 family. As to quaternary structure, part of the 50S ribosomal subunit. Forms a bridge to the 30S subunit in the 70S ribosome.

Functionally, one of the primary rRNA binding proteins. Required for association of the 30S and 50S subunits to form the 70S ribosome, for tRNA binding and peptide bond formation. It has been suggested to have peptidyltransferase activity; this is somewhat controversial. Makes several contacts with the 16S rRNA in the 70S ribosome. The polypeptide is Large ribosomal subunit protein uL2 (Thermofilum pendens (strain DSM 2475 / Hrk 5)).